A 280-amino-acid polypeptide reads, in one-letter code: DCN1-like protein 4 (280 aa).

A disordered region spans residues 37–71; it reads GPESHGTACCSRAMPPRKKRRPTAGDDLSAKKSRQ. In terms of domain architecture, DCUN1 spans 89 to 275; it reads FSSKRCLEWF…LLDEFVEWYK (187 aa).

As to quaternary structure, may interact (via the DCUN1 domain) with unneddylated cullins.

It localises to the nucleus. In terms of biological role, contributes to the neddylation of all cullins by transferring NEDD8 from N-terminally acetylated NEDD8-conjugating E2s enzyme to different cullin C-terminal domain-RBX complexes. The polypeptide is DCN1-like protein 4 (Danio rerio (Zebrafish)).